We begin with the raw amino-acid sequence, 388 residues long: Succinate--CoA ligase [ADP-forming] subunit beta (388 aa).

The region spanning 9 to 244 is the ATP-grasp domain; it reads KEILRKYNVP…LDEEDANEIE (236 aa). ATP is bound by residues lysine 46, 53-55, glutamate 99, alanine 102, and glutamate 107; that span reads GRG. Mg(2+) is bound by residues asparagine 199 and aspartate 213. Residues asparagine 264 and 321 to 323 each bind substrate; that span reads GIM.

This sequence belongs to the succinate/malate CoA ligase beta subunit family. As to quaternary structure, heterotetramer of two alpha and two beta subunits. Mg(2+) is required as a cofactor.

It catalyses the reaction succinate + ATP + CoA = succinyl-CoA + ADP + phosphate. The catalysed reaction is GTP + succinate + CoA = succinyl-CoA + GDP + phosphate. Its pathway is carbohydrate metabolism; tricarboxylic acid cycle; succinate from succinyl-CoA (ligase route): step 1/1. In terms of biological role, succinyl-CoA synthetase functions in the citric acid cycle (TCA), coupling the hydrolysis of succinyl-CoA to the synthesis of either ATP or GTP and thus represents the only step of substrate-level phosphorylation in the TCA. The beta subunit provides nucleotide specificity of the enzyme and binds the substrate succinate, while the binding sites for coenzyme A and phosphate are found in the alpha subunit. The chain is Succinate--CoA ligase [ADP-forming] subunit beta from Cupriavidus necator (strain ATCC 17699 / DSM 428 / KCTC 22496 / NCIMB 10442 / H16 / Stanier 337) (Ralstonia eutropha).